A 199-amino-acid chain; its full sequence is MILNAKFLISASKIDEAPQPIYTEIAFLGRSNVGKSSLINTLCKNKNLAKSSSTPGKTQLINFFEVDCKKDEDKFKLIFIDLPGFGYAKVSKKTKAIWNKNLDEFLKERSSIKLFIHLIDSRHENLDIDLNLDLYLDSFIRADQKKITVFTKADKLNQSQKAKLLNANKNAILVSNLKKSGIDKLEQKIILESLGFNEE.

Residues 21-195 form the EngB-type G domain; it reads IYTEIAFLGR…EQKIILESLG (175 aa). Residues 29–36, 56–60, 81–84, 151–154, and 174–176 each bind GTP; these read GRSNVGKS, GKTQL, DLPG, TKAD, and VSN. 2 residues coordinate Mg(2+): Ser36 and Thr58.

It belongs to the TRAFAC class TrmE-Era-EngA-EngB-Septin-like GTPase superfamily. EngB GTPase family. Requires Mg(2+) as cofactor.

In terms of biological role, necessary for normal cell division and for the maintenance of normal septation. The sequence is that of Probable GTP-binding protein EngB from Campylobacter lari (strain RM2100 / D67 / ATCC BAA-1060).